The following is a 138-amino-acid chain: Acidic phospholipase A2 beta (138 aa).

A signal peptide spans 1 to 16 (MRTLWIVAVLLLGVEG). 7 disulfides stabilise this stretch: cysteine 42/cysteine 131, cysteine 44/cysteine 60, cysteine 59/cysteine 111, cysteine 65/cysteine 138, cysteine 66/cysteine 104, cysteine 73/cysteine 97, and cysteine 91/cysteine 102. Residues tyrosine 43, glycine 45, and glycine 47 each coordinate Ca(2+). The active site involves histidine 63. Position 64 (aspartate 64) interacts with Ca(2+). Residue aspartate 105 is part of the active site.

It belongs to the phospholipase A2 family. Group II subfamily. D49 sub-subfamily. In terms of assembly, dimer. Requires Ca(2+) as cofactor. In terms of tissue distribution, expressed by the venom gland.

Its subcellular location is the secreted. The enzyme catalyses a 1,2-diacyl-sn-glycero-3-phosphocholine + H2O = a 1-acyl-sn-glycero-3-phosphocholine + a fatty acid + H(+). Its function is as follows. PLA2 catalyzes the calcium-dependent hydrolysis of the 2-acyl groups in 3-sn-phosphoglycerides. The sequence is that of Acidic phospholipase A2 beta from Crotalus adamanteus (Eastern diamondback rattlesnake).